Reading from the N-terminus, the 394-residue chain is Elongation factor Tu (394 aa).

Residues 10 to 204 (KPHVNIGTIG…AVDSYIPQPV (195 aa)) form the tr-type G domain. Residues 19–26 (GHVDHGKT) form a G1 region. GTP is bound at residue 19-26 (GHVDHGKT). T26 serves as a coordination point for Mg(2+). Residues 60-64 (GITIS) form a G2 region. The interval 81–84 (DCPG) is G3. GTP is bound by residues 81-85 (DCPGH) and 136-139 (NKVD). Residues 136-139 (NKVD) form a G4 region. The segment at 174–176 (SAL) is G5.

This sequence belongs to the TRAFAC class translation factor GTPase superfamily. Classic translation factor GTPase family. EF-Tu/EF-1A subfamily. Monomer.

The protein localises to the cytoplasm. It catalyses the reaction GTP + H2O = GDP + phosphate + H(+). Its function is as follows. GTP hydrolase that promotes the GTP-dependent binding of aminoacyl-tRNA to the A-site of ribosomes during protein biosynthesis. This chain is Elongation factor Tu, found in Rickettsia parkeri.